The following is a 142-amino-acid chain: Large ribosomal subunit protein uL11 (142 aa).

The protein belongs to the universal ribosomal protein uL11 family. Part of the ribosomal stalk of the 50S ribosomal subunit. Interacts with L10 and the large rRNA to form the base of the stalk. L10 forms an elongated spine to which L12 dimers bind in a sequential fashion forming a multimeric L10(L12)X complex. One or more lysine residues are methylated.

Its function is as follows. Forms part of the ribosomal stalk which helps the ribosome interact with GTP-bound translation factors. The sequence is that of Large ribosomal subunit protein uL11 from Alcanivorax borkumensis (strain ATCC 700651 / DSM 11573 / NCIMB 13689 / SK2).